Here is a 344-residue protein sequence, read N- to C-terminus: MMVIRPVERSDVSALMQLASKTGGGLTSLPANEATLSARIERAIKTWQGELPKSEQGYVFVLEDSETGTVAGICAIEVAVGLNDPWYNYRVGTLVHASKELNVYNALPTLFLSNDHTGSSELCTLFLDPDWRKEGNGYLLSKSRFMFMAAFRDKFNDKVVAEMRGVIDEHGYSPFWQSLGKRFFSMDFSRVDFLCGTGQKAFIAELMPKHPIYTHFLSQEAQDVIGQVHPQTAPARAVLEKEGFRYRNYIDIFDGGPTLECDIDRVRAIRKSRLVEVAEGQPAQGDFPACLVANENYHHFRVVLARTDPATERLILTAAQLDALKCHAGDRVRLVRLCAEEKTA.

Leucine 125 contacts succinyl-CoA. Residue histidine 229 is the Proton donor of the active site.

The protein belongs to the arginine N-succinyltransferase family.

It catalyses the reaction succinyl-CoA + L-arginine = N(2)-succinyl-L-arginine + CoA + H(+). It functions in the pathway amino-acid degradation; L-arginine degradation via AST pathway; L-glutamate and succinate from L-arginine: step 1/5. Functionally, catalyzes the transfer of succinyl-CoA to arginine to produce N(2)-succinylarginine. This chain is Arginine N-succinyltransferase, found in Shigella sonnei (strain Ss046).